Here is a 136-residue protein sequence, read N- to C-terminus: Ig heavy chain V region BCL1 (136 aa).

Residues 1–19 (MGWSCIIFFLVATATGVHS) form the signal peptide. Positions 20–135 (QVQLQQSGPE…WGQGTTLTVS (116 aa)) constitute an Ig-like domain.

This is Ig heavy chain V region BCL1 from Mus musculus (Mouse).